The chain runs to 253 residues: Chemotaxis protein PomA (253 aa).

A run of 4 helical transmembrane segments spans residues 6–26, 28–48, 146–166, and 180–200; these read LLGL…GGSI, MFVD…VVLM, FGDV…VAML, and AVAL…FFPI. Residues 201–253 lie on the Cytoplasmic side of the membrane; it reads ADKLSLRRDQETLNRRLIMDGVLAIQDGQNPRVIDSYLKNYLNEGKRALEIDE.

The protein belongs to the MotA family. Each stator complex is composed of 4 PomA and 2 PomB subunits. 2 A subunits and 1 B subunit are thought to form a single ion channel, so that each stator complex contains two channels.

Its subcellular location is the cell inner membrane. Its function is as follows. PomA and PomB comprise the stator element of the flagellar motor complex. Required for rotation of the flagellar motor. Probable transmembrane proton channel. This Vibrio alginolyticus protein is Chemotaxis protein PomA (pomA).